Here is a 172-residue protein sequence, read N- to C-terminus: C-phycocyanin beta chain (172 aa).

Asparagine 72 is subject to N4-methylasparagine. Residues cysteine 82 and cysteine 153 each coordinate (2R,3E)-phycocyanobilin.

The protein belongs to the phycobiliprotein family. In terms of assembly, heterodimer of an alpha and a beta subunit, which further assembles into trimers and the trimers into hexamers. The basic functional unit of phycobiliproteins is a ring-shaped hexamer formed from two back-to-back trimers contacting via the alpha chain subunits. The trimers are composed of alpha/beta subunit heterodimers arranged around a three-fold axis of symmetry. The phycoerythrins also contain a gamma subunit which is located in the center of the hexamer. In terms of processing, contains two covalently linked phycocyanobilin chromophores.

Its subcellular location is the plastid. The protein resides in the cyanelle thylakoid membrane. In terms of biological role, light-harvesting photosynthetic bile pigment-protein from the phycobiliprotein complex (phycobilisome, PBS). Phycocyanin is the major phycobiliprotein in the PBS rod. This Cyanophora paradoxa protein is C-phycocyanin beta chain (cpcB).